Here is a 1301-residue protein sequence, read N- to C-terminus: ABC transporter BEA3 (1301 aa).

The interval 1 to 30 (MGKRTAENSAANGEGEEKHPEIGVDGRPEK) is disordered. A compositionally biased stretch (basic and acidic residues) spans 15–30 (GEEKHPEIGVDGRPEK). A run of 4 helical transmembrane segments spans residues 54–74 (VGVI…IVFG), 103–123 (LYLL…NFAF), 177–197 (LGVF…AFIY), and 203–223 (LVTF…LPYI). Residues 54 to 345 (VGVIASIGVG…ISTPLLAVSK (292 aa)) enclose the ABC transmembrane type-1 1 domain. Asn-229 carries N-linked (GlcNAc...) asparagine glycosylation. The next 2 helical transmembrane spans lie at 281 to 301 (FIAL…GLAF) and 313 to 333 (INQL…VTAM). The ABC transporter 1 domain maps to 378-667 (IILEDVTFAY…EAGLYYNLVN (290 aa)). An ATP-binding site is contributed by 413–420 (GPSGSGKS). Residues 442-454 (VEKPTDKKNNGGK) show a composition bias toward basic and acidic residues. The interval 442-461 (VEKPTDKKNNGGKEEDEQEL) is disordered. N-linked (GlcNAc...) asparagine glycosylation is found at Asn-511 and Asn-618. The tract at residues 682 to 708 (VIAKEERPSSVHEKAHTESTIEEKPLE) is disordered. The ABC transmembrane type-1 2 domain maps to 735 to 1024 (ALTLFFSACA…ALSFGPNVAQ (290 aa)). 6 helical membrane passes run 745-765 (GAAV…FGYL), 779-799 (SLMW…TFFL), 858-878 (SVFI…AFAW), 880-900 (LALV…YWRM), 961-981 (WVSL…AIVL), and 987-1007 (LLLS…SVLN). Residues 1060–1296 (IELENIYFKY…RGVYWQMCQS (237 aa)) form the ABC transporter 2 domain. 1094-1101 (GASGSGKS) lines the ATP pocket.

This sequence belongs to the ABC transporter superfamily. ABCB family. Multidrug resistance exporter (TC 3.A.1.201) subfamily.

Its subcellular location is the cell membrane. ABC transporter; part of the gene cluster that mediates the biosynthesis of beauvericin (BEA), a non-ribosomal cyclic hexadepsipeptide that shows antibiotic, antifungal, insecticidal, and cancer cell antiproliferative and antihaptotactic activity. Functions as a regulator of beauvericin production, rather than in BEA transport out of the cell. Beauvericin has low toxicity to the producing fungus and BEA3 does not play a role in detoxification and self-protection of the producing fungus. The protein is ABC transporter BEA3 of Gibberella fujikuroi (strain CBS 195.34 / IMI 58289 / NRRL A-6831) (Bakanae and foot rot disease fungus).